We begin with the raw amino-acid sequence, 77 residues long: Large ribosomal subunit protein eL14 (77 aa).

Belongs to the eukaryotic ribosomal protein eL14 family.

This is Large ribosomal subunit protein eL14 from Methanococcus maripaludis (strain C6 / ATCC BAA-1332).